The primary structure comprises 66 residues: uncharacterized protein (66 aa).

Low complexity predominate over residues 1–20 (MTIINSISNFGSNNSFSNNN). The interval 1–47 (MTIINSISNFGSNNSFSNNNTVNQKSVIKRSKQMKNDNTSIGSSFKN) is disordered. Polar residues predominate over residues 36-47 (NDNTSIGSSFKN).

This is an uncharacterized protein from Dictyostelium discoideum (Social amoeba).